The sequence spans 712 residues: Patatin-like phospholipase domain-containing protein ACLA_029670 (712 aa).

Positions 1–10 are enriched in polar residues; sequence MTSAEKSATR. Residues 1–20 form a disordered region; the sequence is MTSAEKSATRNIYDPSALPD. A helical transmembrane segment spans residues 85-105; sequence WPFLFIVFAWITVLGIAYALT. Residues 275–466 form the PNPLA domain; that stretch reads LCLSGGATFA…RTDIPIKALN (192 aa). The GXSXG motif lies at 306 to 310; the sequence is GTSGG. Residue Ser308 is the Nucleophile of the active site. The active-site Proton acceptor is the Asp453. Basic and acidic residues predominate over residues 649–664; that stretch reads FPERHSDYKDESHYTE. The disordered stretch occupies residues 649–686; sequence FPERHSDYKDESHYTEVSDSLSTNSSRPHTPDARRGSI. Polar residues predominate over residues 665 to 676; sequence VSDSLSTNSSRP. Residues 677-686 are compositionally biased toward basic and acidic residues; sequence HTPDARRGSI.

This sequence belongs to the PLPL family.

The protein localises to the membrane. Its function is as follows. Probable lipid hydrolase. The polypeptide is Patatin-like phospholipase domain-containing protein ACLA_029670 (Aspergillus clavatus (strain ATCC 1007 / CBS 513.65 / DSM 816 / NCTC 3887 / NRRL 1 / QM 1276 / 107)).